A 575-amino-acid polypeptide reads, in one-letter code: Urease subunit alpha (575 aa).

The Urease domain occupies 138–575; the sequence is GAVDCHVHLI…LPMTQRYFLF (438 aa). The Ni(2+) site is built by His143, His145, and Lys226. At Lys226 the chain carries N6-carboxylysine. Residue His228 participates in substrate binding. Ni(2+) is bound by residues His255 and His281. His329 acts as the Proton donor in catalysis. A Ni(2+)-binding site is contributed by Asp369.

Belongs to the metallo-dependent hydrolases superfamily. Urease alpha subunit family. As to quaternary structure, heterotrimer of UreA (gamma), UreB (beta) and UreC (alpha) subunits. Three heterotrimers associate to form the active enzyme. Requires Ni cation as cofactor. Carboxylation allows a single lysine to coordinate two nickel ions.

Its subcellular location is the cytoplasm. It carries out the reaction urea + 2 H2O + H(+) = hydrogencarbonate + 2 NH4(+). It participates in nitrogen metabolism; urea degradation; CO(2) and NH(3) from urea (urease route): step 1/1. This chain is Urease subunit alpha, found in Frankia casuarinae (strain DSM 45818 / CECT 9043 / HFP020203 / CcI3).